Here is a 311-residue protein sequence, read N- to C-terminus: tRNA(Ile)-lysidine synthase (311 aa).

31-36 contacts ATP; that stretch reads SGGKDS.

The protein belongs to the tRNA(Ile)-lysidine synthase family.

It localises to the cytoplasm. It carries out the reaction cytidine(34) in tRNA(Ile2) + L-lysine + ATP = lysidine(34) in tRNA(Ile2) + AMP + diphosphate + H(+). Ligates lysine onto the cytidine present at position 34 of the AUA codon-specific tRNA(Ile) that contains the anticodon CAU, in an ATP-dependent manner. Cytidine is converted to lysidine, thus changing the amino acid specificity of the tRNA from methionine to isoleucine. This Petrotoga mobilis (strain DSM 10674 / SJ95) protein is tRNA(Ile)-lysidine synthase.